The following is a 204-amino-acid chain: Holliday junction branch migration complex subunit RuvA (204 aa).

Residues 1 to 64 (MIGRLQGILL…EDAHLLFGFA (64 aa)) form a domain I region. Positions 65–143 (QKTDRTLFRE…GVKQSDFFVE (79 aa)) are domain II. A flexible linker region spans residues 144-155 (STHIPLSPSIES). Residues 156-204 (HSESSSDEAISALIALGYKPAEAEKMVKRVAKPELTSEQVIREALKAAL) are domain III.

It belongs to the RuvA family. As to quaternary structure, homotetramer. Forms an RuvA(8)-RuvB(12)-Holliday junction (HJ) complex. HJ DNA is sandwiched between 2 RuvA tetramers; dsDNA enters through RuvA and exits via RuvB. An RuvB hexamer assembles on each DNA strand where it exits the tetramer. Each RuvB hexamer is contacted by two RuvA subunits (via domain III) on 2 adjacent RuvB subunits; this complex drives branch migration. In the full resolvosome a probable DNA-RuvA(4)-RuvB(12)-RuvC(2) complex forms which resolves the HJ.

It is found in the cytoplasm. Its function is as follows. The RuvA-RuvB-RuvC complex processes Holliday junction (HJ) DNA during genetic recombination and DNA repair, while the RuvA-RuvB complex plays an important role in the rescue of blocked DNA replication forks via replication fork reversal (RFR). RuvA specifically binds to HJ cruciform DNA, conferring on it an open structure. The RuvB hexamer acts as an ATP-dependent pump, pulling dsDNA into and through the RuvAB complex. HJ branch migration allows RuvC to scan DNA until it finds its consensus sequence, where it cleaves and resolves the cruciform DNA. The polypeptide is Holliday junction branch migration complex subunit RuvA (Haemophilus influenzae (strain PittGG)).